Consider the following 89-residue polypeptide: Ribonuclease P protein component 1 (89 aa).

The protein belongs to the eukaryotic/archaeal RNase P protein component 1 family. In terms of assembly, consists of a catalytic RNA component and at least 4-5 protein subunits.

Its subcellular location is the cytoplasm. The enzyme catalyses Endonucleolytic cleavage of RNA, removing 5'-extranucleotides from tRNA precursor.. In terms of biological role, part of ribonuclease P, a protein complex that generates mature tRNA molecules by cleaving their 5'-ends. The polypeptide is Ribonuclease P protein component 1 (Thermoplasma volcanium (strain ATCC 51530 / DSM 4299 / JCM 9571 / NBRC 15438 / GSS1)).